The primary structure comprises 382 residues: Mannitol-1-phosphate 5-dehydrogenase (382 aa).

3 to 14 (ALHFGAGNIGRG) contributes to the NAD(+) binding site. Lysine 269 is subject to N6-acetyllysine.

It belongs to the mannitol dehydrogenase family.

It carries out the reaction D-mannitol 1-phosphate + NAD(+) = beta-D-fructose 6-phosphate + NADH + H(+). This Escherichia coli (strain ATCC 8739 / DSM 1576 / NBRC 3972 / NCIMB 8545 / WDCM 00012 / Crooks) protein is Mannitol-1-phosphate 5-dehydrogenase.